We begin with the raw amino-acid sequence, 277 residues long: Large ribosomal subunit protein uL2 (277 aa).

Disordered regions lie at residues 1–20 (MGIR…SVSD), 27–55 (TQPE…RHRG), and 207–277 (KAGR…RNQS). Residues 27-48 (TQPEKSLTTYKHSSQGRNNRGV) show a composition bias toward polar residues. 2 stretches are compositionally biased toward basic residues: residues 207–220 (KAGR…RPHV) and 259–277 (TRNR…RNQS).

The protein belongs to the universal ribosomal protein uL2 family. Part of the 50S ribosomal subunit. Forms a bridge to the 30S subunit in the 70S ribosome.

Functionally, one of the primary rRNA binding proteins. Required for association of the 30S and 50S subunits to form the 70S ribosome, for tRNA binding and peptide bond formation. It has been suggested to have peptidyltransferase activity; this is somewhat controversial. Makes several contacts with the 16S rRNA in the 70S ribosome. The polypeptide is Large ribosomal subunit protein uL2 (Gloeothece citriformis (strain PCC 7424) (Cyanothece sp. (strain PCC 7424))).